We begin with the raw amino-acid sequence, 209 residues long: uncharacterized protein (209 aa).

This sequence belongs to the flavoredoxin family. It depends on FMN as a cofactor.

This is an uncharacterized protein from Halalkalibacterium halodurans (strain ATCC BAA-125 / DSM 18197 / FERM 7344 / JCM 9153 / C-125) (Bacillus halodurans).